A 290-amino-acid polypeptide reads, in one-letter code: Lipoyl synthase (290 aa).

Residues cysteine 34, cysteine 39, cysteine 45, cysteine 60, cysteine 64, cysteine 67, and serine 273 each coordinate [4Fe-4S] cluster. The Radical SAM core domain maps to 46–262 (WNKRHATVMI…KYIAYSKGFL (217 aa)).

The protein belongs to the radical SAM superfamily. Lipoyl synthase family. It depends on [4Fe-4S] cluster as a cofactor.

The protein localises to the cytoplasm. It carries out the reaction [[Fe-S] cluster scaffold protein carrying a second [4Fe-4S](2+) cluster] + N(6)-octanoyl-L-lysyl-[protein] + 2 oxidized [2Fe-2S]-[ferredoxin] + 2 S-adenosyl-L-methionine + 4 H(+) = [[Fe-S] cluster scaffold protein] + N(6)-[(R)-dihydrolipoyl]-L-lysyl-[protein] + 4 Fe(3+) + 2 hydrogen sulfide + 2 5'-deoxyadenosine + 2 L-methionine + 2 reduced [2Fe-2S]-[ferredoxin]. Its pathway is protein modification; protein lipoylation via endogenous pathway; protein N(6)-(lipoyl)lysine from octanoyl-[acyl-carrier-protein]: step 2/2. In terms of biological role, catalyzes the radical-mediated insertion of two sulfur atoms into the C-6 and C-8 positions of the octanoyl moiety bound to the lipoyl domains of lipoate-dependent enzymes, thereby converting the octanoylated domains into lipoylated derivatives. The sequence is that of Lipoyl synthase from Wolbachia pipientis subsp. Culex pipiens (strain wPip).